Reading from the N-terminus, the 227-residue chain is Orotidine 5'-phosphate decarboxylase (227 aa).

Residues D8, K30, 59–68 (DLKLYDIPNT), T118, R178, Q187, G207, and R208 each bind substrate. The Proton donor role is filled by K61.

This sequence belongs to the OMP decarboxylase family. Type 1 subfamily. Homodimer.

It catalyses the reaction orotidine 5'-phosphate + H(+) = UMP + CO2. Its pathway is pyrimidine metabolism; UMP biosynthesis via de novo pathway; UMP from orotate: step 2/2. Functionally, catalyzes the decarboxylation of orotidine 5'-monophosphate (OMP) to uridine 5'-monophosphate (UMP). The protein is Orotidine 5'-phosphate decarboxylase of Sulfurimonas denitrificans (strain ATCC 33889 / DSM 1251) (Thiomicrospira denitrificans (strain ATCC 33889 / DSM 1251)).